The following is a 340-amino-acid chain: NADH-quinone oxidoreductase subunit H (340 aa).

Transmembrane regions (helical) follow at residues 4–24 (TIGILIWIIIKIIVIVVPLLI), 78–98 (YLFVIAPLFALVPSLVGWAVI), 113–133 (VLYLFAMSSLGVYGVLIAGWA), 151–171 (VSYEIAMGFALVGVLLAAGSM), 184–204 (MLHWWFIPLLPLFLVFWISGI), 244–264 (SMILISTVLAILFMGGWLSPF), 273–293 (IFFIVPGFVWLLLKISFFLFV), and 316–336 (VLIPVTIVWLIVTAVMVVAHV).

Belongs to the complex I subunit 1 family. NDH-1 is composed of 14 different subunits. Subunits NuoA, H, J, K, L, M, N constitute the membrane sector of the complex.

The protein resides in the cell inner membrane. It carries out the reaction a quinone + NADH + 5 H(+)(in) = a quinol + NAD(+) + 4 H(+)(out). In terms of biological role, NDH-1 shuttles electrons from NADH, via FMN and iron-sulfur (Fe-S) centers, to quinones in the respiratory chain. The immediate electron acceptor for the enzyme in this species is believed to be ubiquinone. Couples the redox reaction to proton translocation (for every two electrons transferred, four hydrogen ions are translocated across the cytoplasmic membrane), and thus conserves the redox energy in a proton gradient. This subunit may bind ubiquinone. The polypeptide is NADH-quinone oxidoreductase subunit H (Legionella pneumophila (strain Lens)).